The sequence spans 227 residues: Probable septum site-determining protein MinC (227 aa).

Belongs to the MinC family. As to quaternary structure, interacts with MinD and FtsZ.

In terms of biological role, cell division inhibitor that blocks the formation of polar Z ring septums. Rapidly oscillates between the poles of the cell to destabilize FtsZ filaments that have formed before they mature into polar Z rings. Prevents FtsZ polymerization. The protein is Probable septum site-determining protein MinC of Geobacillus thermodenitrificans (strain NG80-2).